Reading from the N-terminus, the 127-residue chain is Nitrogenase-stabilizing/protective protein NifW (127 aa).

It belongs to the NifW family. As to quaternary structure, homotrimer; associates with NifD.

Functionally, may protect the nitrogenase Fe-Mo protein from oxidative damage. The protein is Nitrogenase-stabilizing/protective protein NifW of Rhizobium etli (strain ATCC 51251 / DSM 11541 / JCM 21823 / NBRC 15573 / CFN 42).